Here is a 243-residue protein sequence, read N- to C-terminus: ATP synthase subunit a, chloroplastic (243 aa).

The next 5 helical transmembrane spans lie at 32–52, 96–116, 129–149, 195–215, and 216–236; these read GQVL…SFVG, TVFL…WALI, DINT…YAGI, LVVG…IMLL, and GCFT…AYIG.

The protein belongs to the ATPase A chain family. In terms of assembly, F-type ATPases have 2 components, CF(1) - the catalytic core - and CF(0) - the membrane proton channel. CF(1) has five subunits: alpha(3), beta(3), gamma(1), delta(1), epsilon(1). CF(0) has four main subunits: a, b, b' and c.

It localises to the plastid. Its subcellular location is the chloroplast thylakoid membrane. Its function is as follows. Key component of the proton channel; it plays a direct role in the translocation of protons across the membrane. The chain is ATP synthase subunit a, chloroplastic from Tetradesmus obliquus (Green alga).